The following is a 522-amino-acid chain: Maturase K (522 aa).

The protein belongs to the intron maturase 2 family. MatK subfamily.

The protein localises to the plastid. It is found in the chloroplast. Usually encoded in the trnK tRNA gene intron. Probably assists in splicing its own and other chloroplast group II introns. This Gladiolus papilio (Goldblotch gladiolus) protein is Maturase K.